The chain runs to 131 residues: Small ribosomal subunit protein uS8 (131 aa).

It belongs to the universal ribosomal protein uS8 family. Part of the 30S ribosomal subunit. Contacts proteins S5 and S12.

Functionally, one of the primary rRNA binding proteins, it binds directly to 16S rRNA central domain where it helps coordinate assembly of the platform of the 30S subunit. This is Small ribosomal subunit protein uS8 from Chlorobium luteolum (strain DSM 273 / BCRC 81028 / 2530) (Pelodictyon luteolum).